A 170-amino-acid polypeptide reads, in one-letter code: Endoribonuclease YbeY (170 aa).

3 residues coordinate Zn(2+): histidine 118, histidine 122, and histidine 128.

This sequence belongs to the endoribonuclease YbeY family. The cofactor is Zn(2+).

It is found in the cytoplasm. In terms of biological role, single strand-specific metallo-endoribonuclease involved in late-stage 70S ribosome quality control and in maturation of the 3' terminus of the 16S rRNA. The chain is Endoribonuclease YbeY from Mycobacteroides abscessus (strain ATCC 19977 / DSM 44196 / CCUG 20993 / CIP 104536 / JCM 13569 / NCTC 13031 / TMC 1543 / L948) (Mycobacterium abscessus).